A 487-amino-acid polypeptide reads, in one-letter code: Alpha-1,4-L-rhamnosidase (487 aa).

Residues 1 to 30 (MKNKKRLCHILKYIITCFLFGVIFIIPIQA) form the signal peptide. The active-site Proton donor is Glu199.

The protein belongs to the glycosyl hydrolase 39 family.

Its subcellular location is the periplasm. Functionally, alpha-rhamnosidase involved in ulvan degradation. Ulvan is the main polysaccharide component of the Ulvales (green seaweed) cell wall. It is composed of disaccharide building blocks comprising 3-sulfated rhamnose (Rha3S) linked to D-glucuronic acid (GlcA), L-iduronic acid (IduA), or D-xylose (Xyl). Endo-acting alpha-1,4-L-rhamnosidase cleaves rhamnose sections interspersed between xylose residues within the polymer, degrading larger oligomers with consecutive Xyl-Rha3S units that are resistant to the ulvan lyases and producing dimers Xyl-Rha3S and Xyl2S-Rha3S as the smallest products. The protein is Alpha-1,4-L-rhamnosidase of Formosa agariphila (strain DSM 15362 / KCTC 12365 / LMG 23005 / KMM 3901 / M-2Alg 35-1).